A 372-amino-acid chain; its full sequence is Enolase (372 aa).

2 residues coordinate substrate: histidine 95 and glutamate 104. The active-site Proton donor is the glutamate 147. Positions 182, 232, and 257 each coordinate Mg(2+). 2 residues coordinate substrate: glutamate 232 and aspartate 257. Lysine 282 acts as the Proton acceptor in catalysis. Substrate is bound by residues serine 309–serine 312 and lysine 333.

The protein belongs to the enolase family. Homodimer. It depends on Mg(2+) as a cofactor.

It localises to the cytoplasm. The catalysed reaction is (2R)-2-phosphoglycerate = phosphoenolpyruvate + H2O. Its pathway is carbohydrate degradation; glycolysis; pyruvate from D-glyceraldehyde 3-phosphate: step 4/5. The protein is Enolase (ENO) of Chlamydomonas reinhardtii (Chlamydomonas smithii).